The following is a 222-amino-acid chain: Uridine diphosphate glucose pyrophosphatase NUDT14 (222 aa).

In terms of domain architecture, Nudix hydrolase spans 38 to 206 (KTHDSVTILM…DIPKTLGVIY (169 aa)). Positions 111 to 129 (PGLSLEEAACKEAWEECGY) match the Nudix box motif.

This sequence belongs to the Nudix hydrolase family. As to quaternary structure, homodimer. Mg(2+) is required as a cofactor.

The protein localises to the cytoplasm. The catalysed reaction is UDP-sugar + H2O = UMP + alpha-D-aldose 1-phosphate.. Hydrolyzes UDP-glucose to glucose 1-phosphate and UMP and ADP-ribose to ribose 5-phosphate and AMP. The physiological substrate is probably UDP-glucose. Poor activity on other substrates such as ADP-glucose, CDP-glucose, GDP-glucose and GDP-mannose. This Mus musculus (Mouse) protein is Uridine diphosphate glucose pyrophosphatase NUDT14 (Nudt14).